Here is a 149-residue protein sequence, read N- to C-terminus: UPF0178 protein VV1_1847 (149 aa).

It belongs to the UPF0178 family.

The chain is UPF0178 protein VV1_1847 from Vibrio vulnificus (strain CMCP6).